The primary structure comprises 135 residues: MARRQTPPGLPSQRQLRAGEIVRHALAEIISREDFRDPDLSNVIVTVGEVRCSPDLKHANIFVTPLGDDSEEGRKRLADALTRAKGFLRTRLGREIELKFTPELHFIADSSYDEATAIDRLLNDPRVRRDVESEG.

It belongs to the RbfA family. As to quaternary structure, monomer. Binds 30S ribosomal subunits, but not 50S ribosomal subunits or 70S ribosomes.

It is found in the cytoplasm. Functionally, one of several proteins that assist in the late maturation steps of the functional core of the 30S ribosomal subunit. Associates with free 30S ribosomal subunits (but not with 30S subunits that are part of 70S ribosomes or polysomes). Required for efficient processing of 16S rRNA. May interact with the 5'-terminal helix region of 16S rRNA. The polypeptide is Ribosome-binding factor A (Hyphomonas neptunium (strain ATCC 15444)).